A 239-amino-acid polypeptide reads, in one-letter code: Myogenic factor 6 (239 aa).

Positions 28 to 59 are disordered; that stretch reads PGVSPLYEGNDSPLSPGQDPVPSETGCESSGE. The bHLH domain occupies 92-143; that stretch reads DRRKAATLRERRRLKKINEAFDALKKKTVPNPNQRLPKVEILRSAINYIEKL. Over residues 182-196 the composition is skewed to polar residues; sequence CQSWQENPDHSSSQM. A disordered region spans residues 182 to 239; it reads CQSWQENPDHSSSQMAGHREGAVLESSESSSLRRLSSIVDSISTEEPKARCPSQISEK. Residues 204 to 223 are compositionally biased toward low complexity; the sequence is VLESSESSSLRRLSSIVDSI.

Efficient DNA binding requires dimerization with another bHLH protein.

Its subcellular location is the nucleus. Functionally, involved in muscle differentiation (myogenic factor). Induces fibroblasts to differentiate into myoblasts. Probable sequence specific DNA-binding protein. The protein is Myogenic factor 6 (myf6) of Danio rerio (Zebrafish).